A 382-amino-acid chain; its full sequence is MSLKEKTHALFAEKFGYPATTHIQAPGRVNLIGEHTDYNDGFVLPCAIDYQTVISCAKRDDRRVRVVAADYDNETDEFSLDEPILTHDSQQWSNYVRGVVKHLQQRDPGFGGADLVISGNVPQGAGLSSSASLEVAVGTVFRHLYHLSLDGAQIALNGQEAENQFVGCNCGIMDQLISALGKKDHALLIDCRSLGTKAVPMPQGVAVVIINSNFKRTLVGSEYNTRREQCETGARFFTQKALRDVSLDQFNAVAHELDPIVAKRVRHVLTENARTVEAADALAKGNLTRMGELMAESHASMRDDFEITVPQIDTLVEIVKSVIGDKGGVRMTGGGFGGCVVALVPEALVPEVQAAVEAQYEARTGIKETFYVCKPSEGAGLC.

34–37 lines the substrate pocket; sequence EHTD. 124–130 contributes to the ATP binding site; the sequence is GAGLSSS. Residues Ser130 and Glu162 each coordinate Mg(2+). Asp174 (proton acceptor) is an active-site residue. Position 223 (Tyr223) interacts with substrate.

The protein belongs to the GHMP kinase family. GalK subfamily.

Its subcellular location is the cytoplasm. The enzyme catalyses alpha-D-galactose + ATP = alpha-D-galactose 1-phosphate + ADP + H(+). Its pathway is carbohydrate metabolism; galactose metabolism. Catalyzes the transfer of the gamma-phosphate of ATP to D-galactose to form alpha-D-galactose-1-phosphate (Gal-1-P). The protein is Galactokinase of Cronobacter sakazakii (strain ATCC BAA-894) (Enterobacter sakazakii).